A 500-amino-acid chain; its full sequence is Probable cytosol aminopeptidase (500 aa).

The Mn(2+) site is built by Lys268 and Asp273. Lys280 is an active-site residue. The Mn(2+) site is built by Asp291, Asp350, and Glu352. The active site involves Arg354.

It belongs to the peptidase M17 family. The cofactor is Mn(2+).

The protein resides in the cytoplasm. The enzyme catalyses Release of an N-terminal amino acid, Xaa-|-Yaa-, in which Xaa is preferably Leu, but may be other amino acids including Pro although not Arg or Lys, and Yaa may be Pro. Amino acid amides and methyl esters are also readily hydrolyzed, but rates on arylamides are exceedingly low.. It carries out the reaction Release of an N-terminal amino acid, preferentially leucine, but not glutamic or aspartic acids.. Its function is as follows. Presumably involved in the processing and regular turnover of intracellular proteins. Catalyzes the removal of unsubstituted N-terminal amino acids from various peptides. The chain is Probable cytosol aminopeptidase from Aromatoleum aromaticum (strain DSM 19018 / LMG 30748 / EbN1) (Azoarcus sp. (strain EbN1)).